We begin with the raw amino-acid sequence, 197 residues long: Adenine phosphoribosyltransferase (197 aa).

The protein belongs to the purine/pyrimidine phosphoribosyltransferase family. In terms of assembly, homodimer.

It localises to the cytoplasm. The enzyme catalyses AMP + diphosphate = 5-phospho-alpha-D-ribose 1-diphosphate + adenine. Its pathway is purine metabolism; AMP biosynthesis via salvage pathway; AMP from adenine: step 1/1. In terms of biological role, catalyzes a salvage reaction resulting in the formation of AMP, that is energically less costly than de novo synthesis. The chain is Adenine phosphoribosyltransferase from Ralstonia nicotianae (strain ATCC BAA-1114 / GMI1000) (Ralstonia solanacearum).